An 827-amino-acid polypeptide reads, in one-letter code: Periplasmic nitrate reductase (827 aa).

Residues Met-1–Ala-32 constitute a signal peptide (tat-type signal). A 4Fe-4S Mo/W bis-MGD-type domain is found at Leu-37–Asp-93. The [4Fe-4S] cluster site is built by Cys-44, Cys-47, Cys-51, and Cys-79. Residues Lys-81, Gln-148, Asn-173, Cys-177, Ser-241–His-245, Gln-260–Asp-262, Met-371, Gln-375, Asn-481, Ser-507–Asp-508, Lys-530, Asp-557, and Thr-717–Ser-726 each bind Mo-bis(molybdopterin guanine dinucleotide). Trp-793 contributes to the substrate binding site. Asn-801 and Lys-818 together coordinate Mo-bis(molybdopterin guanine dinucleotide).

Belongs to the prokaryotic molybdopterin-containing oxidoreductase family. NasA/NapA/NarB subfamily. As to quaternary structure, component of the periplasmic nitrate reductase NapAB complex composed of NapA and NapB. The cofactor is [4Fe-4S] cluster. It depends on Mo-bis(molybdopterin guanine dinucleotide) as a cofactor. In terms of processing, predicted to be exported by the Tat system. The position of the signal peptide cleavage has not been experimentally proven.

The protein localises to the periplasm. The enzyme catalyses 2 Fe(II)-[cytochrome] + nitrate + 2 H(+) = 2 Fe(III)-[cytochrome] + nitrite + H2O. In terms of biological role, catalytic subunit of the periplasmic nitrate reductase complex NapAB. Receives electrons from NapB and catalyzes the reduction of nitrate to nitrite. This Paraburkholderia xenovorans (strain LB400) protein is Periplasmic nitrate reductase.